The sequence spans 523 residues: REST corepressor 2 (523 aa).

The segment at 1–43 is disordered; that stretch reads MPSVMEKPSAGSGILSRSRAKTAPNGGQPHSEDDSSEEEHSHD. The segment covering 30-43 has biased composition (basic and acidic residues); the sequence is HSEDDSSEEEHSHD. Residues Ser31, Ser35, Ser36, and Ser63 each carry the phosphoserine modification. One can recognise an ELM2 domain in the interval 44–129; that stretch reads SMIRVGTNYQ…KSLADLANFT (86 aa). Residue Lys88 forms a Glycyl lysine isopeptide (Lys-Gly) (interchain with G-Cter in SUMO2) linkage. The 52-residue stretch at 130–181 folds into the SANT 1 domain; that stretch reads PFPDEWTVEDKVLFEQAFGFHGKCFQRIQQMLPDKLIPSLVKYYYSWKKTRS. Residues 185 to 265 are disordered; that stretch reads VMDRQARRLG…RRRPPKGMYL (81 aa). Position 202 is a phosphoserine (Ser202). Positions 248-260 are enriched in basic residues; sequence YRHHPLRTRRRPP. Positions 283–314 form a coiled coil; the sequence is TLRGLDSQLISLKRQVQSMKQTNSSLRQALEG. The region spanning 327–378 is the SANT 2 domain; that stretch reads KFNSRWTTDEQLLAVQAIRRYGKDFGAIAEVIGNKTLTQVKTFFVSYRRRFN. The disordered stretch occupies residues 387–523; that stretch reads EAEQDGAPTA…AQLEPPAPSL (137 aa). Pro residues predominate over residues 432–459; it reads SVPPAPPPPPPPTSLSQPPPLLRPPLPT. The segment covering 460–482 has biased composition (low complexity); it reads APTLLRQPPPLQQGRFLQPRLAP. Arg479 bears the Asymmetric dimethylarginine mark.

This sequence belongs to the CoREST family.

Its subcellular location is the nucleus. In terms of biological role, may act as a component of a corepressor complex that represses transcription. The sequence is that of REST corepressor 2 (Rcor2) from Rattus norvegicus (Rat).